The sequence spans 339 residues: MVREEVAGSTQTLQWKCVESRVDSKRLYYGRFILSPLRKGQADTVGIALRRALLGEIEGTCITRAKFGSVPHEYSTIAGIEESVQEILLNLKEIVLRSNLYGVRDASICVKGPRYITAQDIILPPSVEIVDTAQPIANLTEPIDFCIELQIKRDRGYQTELRKNYQDGSYPIDAVSMPVRNVNYSIFSCGNGNEKHEILFLEIWTNGSLTPKEALYEASRNLIDLFLPFLHAEEEGTSFEENKNRFTPPLFTFQKRLTNLKKNKKGIPLNCIFIDQLELPSRTYNCLKRANIHTLLDLLSKTEEDLMRIESFRMEDRKQIWDTLEKYLPMDLLKNKLSF.

The segment at 1–233 (MVREEVAGST…DLFLPFLHAE (233 aa)) is alpha N-terminal domain (alpha-NTD). Residues 266–339 (GIPLNCIFID…MDLLKNKLSF (74 aa)) are alpha C-terminal domain (alpha-CTD).

It belongs to the RNA polymerase alpha chain family. As to quaternary structure, in plastids the minimal PEP RNA polymerase catalytic core is composed of four subunits: alpha, beta, beta', and beta''. When a (nuclear-encoded) sigma factor is associated with the core the holoenzyme is formed, which can initiate transcription.

It is found in the plastid. The protein resides in the chloroplast. It carries out the reaction RNA(n) + a ribonucleoside 5'-triphosphate = RNA(n+1) + diphosphate. DNA-dependent RNA polymerase catalyzes the transcription of DNA into RNA using the four ribonucleoside triphosphates as substrates. This is DNA-directed RNA polymerase subunit alpha from Agrostis stolonifera (Creeping bentgrass).